The primary structure comprises 663 residues: UvrABC system protein B (663 aa).

Residues 31 to 271 (DNIEGGEKAQ…EASIAKIQAE (241 aa)) enclose the Helicase ATP-binding domain. 44–51 (GATGTGKT) contacts ATP. Residues 97-120 (YYDYYQPEAYVPSSDTYIEKDSSV) carry the Beta-hairpin motif. In terms of domain architecture, Helicase C-terminal spans 435–601 (QMDDLLGEIN…TIKKEIRDLI (167 aa)). In terms of domain architecture, UVR spans 627 to 662 (QEAIKKLQKQMHEAAELLDFELAAQIRDMVLELKSM).

This sequence belongs to the UvrB family. Forms a heterotetramer with UvrA during the search for lesions. Interacts with UvrC in an incision complex.

It is found in the cytoplasm. Its function is as follows. The UvrABC repair system catalyzes the recognition and processing of DNA lesions. A damage recognition complex composed of 2 UvrA and 2 UvrB subunits scans DNA for abnormalities. Upon binding of the UvrA(2)B(2) complex to a putative damaged site, the DNA wraps around one UvrB monomer. DNA wrap is dependent on ATP binding by UvrB and probably causes local melting of the DNA helix, facilitating insertion of UvrB beta-hairpin between the DNA strands. Then UvrB probes one DNA strand for the presence of a lesion. If a lesion is found the UvrA subunits dissociate and the UvrB-DNA preincision complex is formed. This complex is subsequently bound by UvrC and the second UvrB is released. If no lesion is found, the DNA wraps around the other UvrB subunit that will check the other stand for damage. This is UvrABC system protein B from Streptococcus uberis (strain ATCC BAA-854 / 0140J).